The sequence spans 262 residues: Acyl-[acyl-carrier-protein]--UDP-N-acetylglucosamine O-acyltransferase (262 aa).

This sequence belongs to the transferase hexapeptide repeat family. LpxA subfamily. As to quaternary structure, homotrimer.

Its subcellular location is the cytoplasm. The enzyme catalyses a (3R)-hydroxyacyl-[ACP] + UDP-N-acetyl-alpha-D-glucosamine = a UDP-3-O-[(3R)-3-hydroxyacyl]-N-acetyl-alpha-D-glucosamine + holo-[ACP]. It functions in the pathway glycolipid biosynthesis; lipid IV(A) biosynthesis; lipid IV(A) from (3R)-3-hydroxytetradecanoyl-[acyl-carrier-protein] and UDP-N-acetyl-alpha-D-glucosamine: step 1/6. Involved in the biosynthesis of lipid A, a phosphorylated glycolipid that anchors the lipopolysaccharide to the outer membrane of the cell. The chain is Acyl-[acyl-carrier-protein]--UDP-N-acetylglucosamine O-acyltransferase from Paraburkholderia phymatum (strain DSM 17167 / CIP 108236 / LMG 21445 / STM815) (Burkholderia phymatum).